Here is a 122-residue protein sequence, read N- to C-terminus: Large ribosomal subunit protein bL17 (122 aa).

It belongs to the bacterial ribosomal protein bL17 family. In terms of assembly, part of the 50S ribosomal subunit. Contacts protein L32.

The chain is Large ribosomal subunit protein bL17 from Nautilia profundicola (strain ATCC BAA-1463 / DSM 18972 / AmH).